We begin with the raw amino-acid sequence, 653 residues long: Phospholipid-transporting ATPase VD (653 aa).

Over 1–375 the chain is Cytoplasmic; it reads MACNLCYEAE…GHWCYTRLSN (375 aa). ATP-binding positions include glutamate 14, phenylalanine 56, lysine 80, arginine 124, threonine 204, glycine 205, aspartate 206, 259 to 266, arginine 293, and lysine 299; that span reads GLIITGKT. A Mg(2+)-binding site is contributed by aspartate 319. Residues asparagine 322 and aspartate 323 each contribute to the ATP site. Aspartate 323 is a binding site for Mg(2+). The helical transmembrane segment at 376–396 threads the bilayer; sequence MILYFFYKNVAYVNLLFWYQF. Residues 397-407 lie on the Exoplasmic loop side of the membrane; sequence FCGFSGTSMTD. Residues 408–428 traverse the membrane as a helical segment; that stretch reads YWVLIFFNLLFTSAPPVIYGV. Over 429-458 the chain is Cytoplasmic; it reads LEKDVSAETLMQLPELYKSGQKSEAYLPHT. Residues 459 to 480 traverse the membrane as a helical segment; that stretch reads FWITLLDAFYQSLVCFFVPYFT. At 481 to 487 the chain is on the exoplasmic loop side; sequence YQGSDID. Residues 488-510 traverse the membrane as a helical segment; it reads IFAFGNPLNTAALFIILLHLIIE. The Cytoplasmic segment spans residues 511–516; that stretch reads SKSLTW. Residues 517-537 traverse the membrane as a helical segment; that stretch reads IHMLVITGSILSYFLFAIVFG. Residues 538–555 are Exoplasmic loop-facing; the sequence is AMCVTCNPPSNPYWIMQE. Residues 556-580 form a helical membrane-spanning segment; the sequence is HVLDPVFYLVCILTTCIALLPRFVY. The Cytoplasmic segment spans residues 581–653; it reads RGAGKMNQVT…AFEMARPCKD (73 aa).

The protein belongs to the cation transport ATPase (P-type) (TC 3.A.3) family. Type IV subfamily. Component of a P4-ATPase flippase complex which consists of a catalytic alpha subunit ATP10A and an accessory beta subunit TMEM30A. Mg(2+) is required as a cofactor. Autophosphorylated at the conserved aspartate of the P-type ATPase signature sequence.

It is found in the cell membrane. The protein localises to the endoplasmic reticulum membrane. It carries out the reaction ATP + H2O + phospholipidSide 1 = ADP + phosphate + phospholipidSide 2.. The enzyme catalyses a beta-D-glucosyl-(1&lt;-&gt;1')-N-acylsphing-4-enine(out) + ATP + H2O = a beta-D-glucosyl-(1&lt;-&gt;1')-N-acylsphing-4-enine(in) + ADP + phosphate + H(+). Its function is as follows. Catalytic component of a P4-ATPase flippase complex, which catalyzes the hydrolysis of ATP coupled to the transport of glucosylceramide (GlcCer) from the outer to the inner leaflet of the plasma membrane. In Macaca fascicularis (Crab-eating macaque), this protein is Phospholipid-transporting ATPase VD (ATP10D).